We begin with the raw amino-acid sequence, 125 residues long: Small ribosomal subunit protein uS12m (125 aa).

Belongs to the universal ribosomal protein uS12 family.

It is found in the mitochondrion. Functionally, protein S12 is involved in the translation initiation step. This Allium cepa (Onion) protein is Small ribosomal subunit protein uS12m (RPS12).